The sequence spans 535 residues: Glutamate--cysteine ligase (535 aa).

It belongs to the glutamate--cysteine ligase type 1 family. Type 1 subfamily.

The catalysed reaction is L-cysteine + L-glutamate + ATP = gamma-L-glutamyl-L-cysteine + ADP + phosphate + H(+). It participates in sulfur metabolism; glutathione biosynthesis; glutathione from L-cysteine and L-glutamate: step 1/2. The chain is Glutamate--cysteine ligase from Pseudomonas syringae pv. syringae (strain B728a).